Here is a 249-residue protein sequence, read N- to C-terminus: Ditrans,polycis-undecaprenyl-diphosphate synthase ((2E,6E)-farnesyl-diphosphate specific) (249 aa).

Asp-18 is an active-site residue. A Mg(2+)-binding site is contributed by Asp-18. Residues Gly-19–Arg-22, Phe-23, Lys-31, His-35, and Ser-63–Glu-65 contribute to the substrate site. Asn-66 acts as the Proton acceptor in catalysis. Residues Trp-67, Arg-69, Arg-186, and Arg-192–Ser-194 each bind substrate. A Mg(2+)-binding site is contributed by Glu-205.

The protein belongs to the UPP synthase family. In terms of assembly, homodimer. Mg(2+) is required as a cofactor.

It carries out the reaction 8 isopentenyl diphosphate + (2E,6E)-farnesyl diphosphate = di-trans,octa-cis-undecaprenyl diphosphate + 8 diphosphate. Functionally, catalyzes the sequential condensation of isopentenyl diphosphate (IPP) with (2E,6E)-farnesyl diphosphate (E,E-FPP) to yield (2Z,6Z,10Z,14Z,18Z,22Z,26Z,30Z,34E,38E)-undecaprenyl diphosphate (di-trans,octa-cis-UPP). UPP is the precursor of glycosyl carrier lipid in the biosynthesis of bacterial cell wall polysaccharide components such as peptidoglycan and lipopolysaccharide. This chain is Ditrans,polycis-undecaprenyl-diphosphate synthase ((2E,6E)-farnesyl-diphosphate specific), found in Acinetobacter baylyi (strain ATCC 33305 / BD413 / ADP1).